The sequence spans 77 residues: Putative protein p6 (77 aa).

A disordered region spans residues Asn-58–Glu-77. A compositionally biased stretch (basic residues) spans Thr-67–Glu-77.

In Acyrthosiphon pisum secondary endosymbiont phage 1 (Bacteriophage APSE-1), this protein is Putative protein p6 (6).